The chain runs to 257 residues: RNA polymerase sigma-G factor (257 aa).

A Polymerase core binding motif is present at residues aspartate 66–isoleucine 79. The segment at residues glutamine 228–lysine 247 is a DNA-binding region (H-T-H motif).

The protein belongs to the sigma-70 factor family.

Its function is as follows. Sigma factors are initiation factors that promote the attachment of RNA polymerase to specific initiation sites and are then released. This sigma factor is responsible for the expression of sporulation specific genes. This is RNA polymerase sigma-G factor (sigG) from Clostridium acetobutylicum (strain ATCC 824 / DSM 792 / JCM 1419 / IAM 19013 / LMG 5710 / NBRC 13948 / NRRL B-527 / VKM B-1787 / 2291 / W).